The sequence spans 219 residues: MYYPINEIFQTIQGEGYYTGTPSIFIRLQGCPVHCKWCDTKYTWKCNNEDQISYEKIIMKKKSNRKWSYMNVKEIILIIKIKKWTAKHIVITGGEPCLYNLLEITKELEKEDYKCQIETSGTELIKCSLNTWITLSPKINKKTLKTSILRSNEIKYPVLKKEDLFYLNSILKKIKNKKHNLIFLQPISQNEEALNICIKTCIIKNWRLSVQIHKYLKIR.

Residues 12–14 (IQG) and arginine 27 contribute to the substrate site. In terms of domain architecture, Radical SAM core spans 18 to 219 (YTGTPSIFIR…VQIHKYLKIR (202 aa)). The [4Fe-4S] cluster site is built by cysteine 31, cysteine 35, and cysteine 38. Threonine 40 is a binding site for Mg(2+). Threonine 92 provides a ligand contact to substrate. S-adenosyl-L-methionine contacts are provided by residues glycine 94 and 136–138 (SPK).

Belongs to the radical SAM superfamily. 7-carboxy-7-deazaguanine synthase family. In terms of assembly, homodimer. Requires [4Fe-4S] cluster as cofactor. S-adenosyl-L-methionine is required as a cofactor. The cofactor is Mg(2+).

It catalyses the reaction 6-carboxy-5,6,7,8-tetrahydropterin + H(+) = 7-carboxy-7-deazaguanine + NH4(+). The protein operates within purine metabolism; 7-cyano-7-deazaguanine biosynthesis. In terms of biological role, catalyzes the complex heterocyclic radical-mediated conversion of 6-carboxy-5,6,7,8-tetrahydropterin (CPH4) to 7-carboxy-7-deazaguanine (CDG), a step common to the biosynthetic pathways of all 7-deazapurine-containing compounds. The sequence is that of 7-carboxy-7-deazaguanine synthase from Buchnera aphidicola subsp. Schizaphis graminum (strain Sg).